We begin with the raw amino-acid sequence, 305 residues long: N-acetylglucosamine-1-phosphotransferase subunit gamma (305 aa).

Residues 1-24 (MAAGLARLLLLLGLSAGGPAPAGA) form the signal peptide. The MRH domain occupies 69-171 (GKCFSLVEST…TFETPLVCHP (103 aa)). Cys-71 and Cys-84 are oxidised to a cystine. Asn-88 and Asn-115 each carry an N-linked (GlcNAc...) asparagine glycan. Cystine bridges form between Cys-129/Cys-157 and Cys-142/Cys-169. Residues 176-279 (VYPTLPEALQ…YTRPTETSNL (104 aa)) enclose the DMAP1-binding domain. Residues 267–305 (GIPYTRPTETSNLEHLGHETPRAKSPEQLRGDPGLRGSL) form a disordered region. Over residues 281–296 (HLGHETPRAKSPEQLR) the composition is skewed to basic and acidic residues.

Homodimer; disulfide-linked. Hexamer of two alpha (GNPTAB), two beta (GNPTAB) and two gamma (GNPTG) subunits; disulfide-linked. The alpha and/or the beta subunits of the enzyme constitute the catalytic subunits. In terms of processing, cys-245 mediates the formation of the interchain disulfide bond for formation of the homodimer. Cys-142, Cys-157 and Cys-169 are involved in intramolecular disulfide bonds formation. Widely expressed.

Its subcellular location is the secreted. The protein localises to the golgi apparatus. Its function is as follows. Non-catalytic subunit of the N-acetylglucosamine-1-phosphotransferase complex, an enzyme that catalyzes the formation of mannose 6-phosphate (M6P) markers on high mannose type oligosaccharides in the Golgi apparatus. Binds and presents the high mannose glycans of the acceptor to the catalytic alpha and beta subunits (GNPTAB). Enhances the rate of N-acetylglucosamine-1-phosphate transfer to the oligosaccharides of acid hydrolase acceptors. In Homo sapiens (Human), this protein is N-acetylglucosamine-1-phosphotransferase subunit gamma (GNPTG).